We begin with the raw amino-acid sequence, 247 residues long: NAD(P)H-quinone oxidoreductase subunit K (247 aa).

4 residues coordinate [4Fe-4S] cluster: Cys63, Cys64, Cys128, and Cys159.

Belongs to the complex I 20 kDa subunit family. In terms of assembly, NDH-1 can be composed of about 15 different subunits; different subcomplexes with different compositions have been identified which probably have different functions. [4Fe-4S] cluster serves as cofactor.

Its subcellular location is the cellular thylakoid membrane. The enzyme catalyses a plastoquinone + NADH + (n+1) H(+)(in) = a plastoquinol + NAD(+) + n H(+)(out). It catalyses the reaction a plastoquinone + NADPH + (n+1) H(+)(in) = a plastoquinol + NADP(+) + n H(+)(out). Functionally, NDH-1 shuttles electrons from an unknown electron donor, via FMN and iron-sulfur (Fe-S) centers, to quinones in the respiratory and/or the photosynthetic chain. The immediate electron acceptor for the enzyme in this species is believed to be plastoquinone. Couples the redox reaction to proton translocation, and thus conserves the redox energy in a proton gradient. Cyanobacterial NDH-1 also plays a role in inorganic carbon-concentration. The polypeptide is NAD(P)H-quinone oxidoreductase subunit K (Microcystis aeruginosa (strain NIES-843 / IAM M-2473)).